Here is an 837-residue protein sequence, read N- to C-terminus: Ribosome-releasing factor 2, mitochondrial (837 aa).

The transit peptide at 1-29 directs the protein to the mitochondrion; sequence MFSINARTKVPIWVPFIARKGFSMSTRQL. Positions 40 to 331 constitute a tr-type G domain; it reads LNTRNIGIIA…GVVDYLPSPL (292 aa). GTP is bound by residues 49-56, 113-117, and 167-170; these read AHIDAGKT, DTPGH, and NKMD. A disordered region spans residues 338–359; sequence ITASTSKVSKKQKQKKNSKVSS. Residues 345–355 show a composition bias toward basic residues; it reads VSKKQKQKKNS.

Belongs to the TRAFAC class translation factor GTPase superfamily. Classic translation factor GTPase family. EF-G/EF-2 subfamily.

It localises to the mitochondrion. In terms of biological role, mitochondrial GTPase that mediates the disassembly of ribosomes from messenger RNA at the termination of mitochondrial protein biosynthesis. Not involved in the GTP-dependent ribosomal translocation step during translation elongation. The polypeptide is Ribosome-releasing factor 2, mitochondrial (Meyerozyma guilliermondii (strain ATCC 6260 / CBS 566 / DSM 6381 / JCM 1539 / NBRC 10279 / NRRL Y-324) (Yeast)).